A 254-amino-acid polypeptide reads, in one-letter code: Ribonuclease HII (254 aa).

Positions 70-254 (QAIAGIDEVG…TFEPVKSMLG (185 aa)) constitute an RNase H type-2 domain. Positions 76, 77, and 168 each coordinate a divalent metal cation.

Belongs to the RNase HII family. Requires Mn(2+) as cofactor. The cofactor is Mg(2+).

Its subcellular location is the cytoplasm. It carries out the reaction Endonucleolytic cleavage to 5'-phosphomonoester.. Functionally, endonuclease that specifically degrades the RNA of RNA-DNA hybrids. This chain is Ribonuclease HII, found in Streptococcus gordonii (strain Challis / ATCC 35105 / BCRC 15272 / CH1 / DL1 / V288).